The following is a 371-amino-acid chain: Bifunctional enzyme IspD/IspF (371 aa).

Residues M1–I212 form a 2-C-methyl-D-erythritol 4-phosphate cytidylyltransferase region. Positions F213–F371 are 2-C-methyl-D-erythritol 2,4-cyclodiphosphate synthase. Positions 219 and 221 each coordinate a divalent metal cation. Residues D219–H221 and H245–S246 contribute to the 4-CDP-2-C-methyl-D-erythritol 2-phosphate site. H253 contributes to the a divalent metal cation binding site. Residues D267–G269, F272–D276, S341–E344, F348, and R351 each bind 4-CDP-2-C-methyl-D-erythritol 2-phosphate.

In the N-terminal section; belongs to the IspD/TarI cytidylyltransferase family. IspD subfamily. It in the C-terminal section; belongs to the IspF family. It depends on a divalent metal cation as a cofactor.

It carries out the reaction 2-C-methyl-D-erythritol 4-phosphate + CTP + H(+) = 4-CDP-2-C-methyl-D-erythritol + diphosphate. The catalysed reaction is 4-CDP-2-C-methyl-D-erythritol 2-phosphate = 2-C-methyl-D-erythritol 2,4-cyclic diphosphate + CMP. It participates in isoprenoid biosynthesis; isopentenyl diphosphate biosynthesis via DXP pathway; isopentenyl diphosphate from 1-deoxy-D-xylulose 5-phosphate: step 2/6. The protein operates within isoprenoid biosynthesis; isopentenyl diphosphate biosynthesis via DXP pathway; isopentenyl diphosphate from 1-deoxy-D-xylulose 5-phosphate: step 4/6. Bifunctional enzyme that catalyzes the formation of 4-diphosphocytidyl-2-C-methyl-D-erythritol from CTP and 2-C-methyl-D-erythritol 4-phosphate (MEP) (IspD), and catalyzes the conversion of 4-diphosphocytidyl-2-C-methyl-D-erythritol 2-phosphate (CDP-ME2P) to 2-C-methyl-D-erythritol 2,4-cyclodiphosphate (ME-CPP) with a corresponding release of cytidine 5-monophosphate (CMP) (IspF). This Campylobacter hominis (strain ATCC BAA-381 / DSM 21671 / CCUG 45161 / LMG 19568 / NCTC 13146 / CH001A) protein is Bifunctional enzyme IspD/IspF.